A 285-amino-acid chain; its full sequence is Purine biosynthesis transcriptional repressor PurR (285 aa).

The segment at 1–73 is DNA binding domain; sequence MKFRRSGRLV…GAAGGVKYIP (73 aa). The interval 74 to 285 is effector binding domain; that stretch reads KMKQAEAEEF…NLLKNGETES (212 aa). Y102 is a guanosine 3',5'-bis(diphosphate) binding site. 5-phospho-alpha-D-ribose 1-diphosphate-binding residues include A138, T139, K140, and R160. Positions 178 and 179 each coordinate guanosine 3',5'-bis(diphosphate). 5-phospho-alpha-D-ribose 1-diphosphate-binding residues include D203, D204, F205, K207, and A208. Residue K207 participates in guanosine 3',5'-bis(diphosphate) binding. Positions 209, 210, and 211 each coordinate guanosine 3',5'-bis(diphosphate). T211 is a binding site for 5-phospho-alpha-D-ribose 1-diphosphate.

The protein belongs to the purine/pyrimidine phosphoribosyltransferase family. PurR subfamily. Homodimer.

Its activity is regulated as follows. The binding of PurR to DNA, and therefore the repressor activity, is influenced by interaction with the effector molecules 5-phosphoribosyl 1-pyrophosphate (PRPP) and (p)ppGpp. PRPP binds to PurR and reduces affinity of PurR for DNA, which inhibits the repressor activity and induces transcription of the target genes. On the contrary, (p)ppGpp enhances binding of PurR to DNA and repression of the transcription. PRPP and (p)ppGpp compete for PurR binding and allosteric control of transcription. ppGpp maintains PurR-DNA interaction and prevents PRPP from de-repressing PurR regulation during conditions that lead to (p)ppGpp induction, such as upon amino acid starvation. DNA-binding transcriptional repressor that controls the expression of a number of genes involved in the synthesis, metabolism and transport of purines. In response to a signal of excess adenine, represses the transcription of the pur operon, which encodes enzymes of the purine biosynthetic pathway. It also represses the expression of the purA and purR genes. In addition, controls the expression of several other genes or operons, which encode enzymes or transporters playing a role in purine nucleotide metabolism. Acts by binding directly to specific DNA sequences, named PurBoxes, in the upstream control regions of affected genes. Two PurBoxes are required for high-affinity PurR binding. Also responds to amino acid starvation via (p)ppGpp, which strongly increases PurR activity and repression of purine nucleotide biosynthesis genes. The sequence is that of Purine biosynthesis transcriptional repressor PurR from Bacillus subtilis (strain 168).